Consider the following 467-residue polypeptide: Asparagine--tRNA ligase (467 aa).

It belongs to the class-II aminoacyl-tRNA synthetase family. Homodimer.

The protein resides in the cytoplasm. It catalyses the reaction tRNA(Asn) + L-asparagine + ATP = L-asparaginyl-tRNA(Asn) + AMP + diphosphate + H(+). The protein is Asparagine--tRNA ligase of Baumannia cicadellinicola subsp. Homalodisca coagulata.